The chain runs to 928 residues: Neuropilin-1 (928 aa).

An N-terminal signal peptide occupies residues 1-21 (MLLRLLSCCCWLLCSLRSSWA). Residues 22-860 (SRNDKCGDTI…PGNVLKTLDP (839 aa)) lie on the Extracellular side of the membrane. 3 disulfide bridges follow: Cys-27–Cys-54, Cys-82–Cys-104, and Cys-147–Cys-173. 2 consecutive CUB domains span residues 27-141 (CGDT…YEVF) and 147-265 (CSRN…FSVV). An N-linked (GlcNAc...) asparagine glycan is attached at Asn-150. The Ca(2+) site is built by Glu-195, Asp-209, and Asp-250. Cysteines 206 and 228 form a disulfide. 3 N-linked (GlcNAc...) asparagine glycosylation sites follow: Asn-261, Asn-300, and Asn-523. Intrachain disulfides connect Cys-275–Cys-424 and Cys-431–Cys-584. 2 consecutive F5/8 type C domains span residues 275 to 424 (CKEA…LYGC) and 431 to 584 (CSRM…LLGC). Residue Ser-613 is glycosylated (O-linked (Xyl...) (chondroitin sulfate) serine; alternate). Ser-613 carries O-linked (Xyl...) (heparan sulfate) serine; alternate glycosylation. A disordered region spans residues 624 to 645 (GATGQSTETPTVEASPEEPDMT). Polar residues predominate over residues 625–635 (ATGQSTETPTV). An MAM domain is found at 646-812 (HSDLDCKFGW…NHISPSQCRA (167 aa)). O-linked (Xyl...) (chondroitin sulfate) serine glycosylation is present at Ser-834. N-linked (GlcNAc...) asparagine glycosylation is present at Asn-844. A helical membrane pass occupies residues 861 to 883 (ILITIIAMSALGVLLGAICGVVL). Residues 884-928 (YCACWHNGMSERNLSALENYNFELVDGVKLKKDKLNTQNSYSEAS) lie on the Cytoplasmic side of the membrane.

The protein belongs to the neuropilin family. As to quaternary structure, homodimer, and heterodimer. As to expression, retinal ganglion cells and visual center neurons.

It localises to the mitochondrion membrane. It is found in the cell membrane. In terms of biological role, receptor involved in the development of the cardiovascular system, in angiogenesis, in the formation of certain neuronal circuits and in organogenesis outside the nervous system. Mediates the chemorepulsant activity of semaphorins. Binding to VEGFA initiates a signaling pathway needed for motor neuron axon guidance and cell body migration, including for the caudal migration of facial motor neurons from rhombomere 4 to rhombomere 6 during embryonic development. Regulates mitochondrial iron transport via interaction. This Xenopus laevis (African clawed frog) protein is Neuropilin-1 (nrp1).